The chain runs to 93 residues: Large ribosomal subunit protein uL23cz/uL23cy (93 aa).

Belongs to the universal ribosomal protein uL23 family. In terms of assembly, part of the 50S ribosomal subunit.

Its subcellular location is the plastid. The protein resides in the chloroplast. Functionally, binds to 23S rRNA. This is Large ribosomal subunit protein uL23cz/uL23cy (rpl23-A) from Arabidopsis thaliana (Mouse-ear cress).